Here is a 91-residue protein sequence, read N- to C-terminus: Sec-independent protein translocase protein TatA (91 aa).

The chain crosses the membrane as a helical span at residues 1–21; sequence MGAMSPWHWAIVALVVIILFG. Residues 44–91 form a disordered region; that stretch reads KEMQNDNSTPAPTAQQSAPAELPVADTTTAPVTPPAPVQPQHTEPKSA. Residues 51–74 show a composition bias toward low complexity; it reads STPAPTAQQSAPAELPVADTTTAP.

It belongs to the TatA/E family. As to quaternary structure, the Tat system comprises two distinct complexes: a TatABC complex, containing multiple copies of TatA, TatB and TatC subunits, and a separate TatA complex, containing only TatA subunits. Substrates initially bind to the TatABC complex, which probably triggers association of the separate TatA complex to form the active translocon.

The protein localises to the cell membrane. Functionally, part of the twin-arginine translocation (Tat) system that transports large folded proteins containing a characteristic twin-arginine motif in their signal peptide across membranes. TatA could form the protein-conducting channel of the Tat system. The chain is Sec-independent protein translocase protein TatA from Rhodococcus jostii (strain RHA1).